The following is a 187-amino-acid chain: UPF0301 protein Clim_0777 (187 aa).

The protein belongs to the UPF0301 (AlgH) family.

The chain is UPF0301 protein Clim_0777 from Chlorobium limicola (strain DSM 245 / NBRC 103803 / 6330).